A 306-amino-acid chain; its full sequence is Polyisoprenyl-teichoic acid--peptidoglycan teichoic acid transferase TagU (306 aa).

Residues 1–11 (MRNERRKKKKT) lie on the Cytoplasmic side of the membrane. Residues 12-32 (LLLTILTIIGLLVLGTGGYAY) traverse the membrane as a helical; Signal-anchor for type II membrane protein segment. The Extracellular portion of the chain corresponds to 33–306 (YLWHKAASTV…TKELKESLEK (274 aa)).

The protein belongs to the LytR/CpsA/Psr (LCP) family. As to quaternary structure, interacts with MreB. Interacts with FloT.

It is found in the cell membrane. It localises to the membrane raft. The protein operates within cell wall biogenesis. In terms of biological role, may catalyze the final step in cell wall teichoic acid biosynthesis, the transfer of the anionic cell wall polymers (APs) from their lipid-linked precursor to the cell wall peptidoglycan (PG). The sequence is that of Polyisoprenyl-teichoic acid--peptidoglycan teichoic acid transferase TagU from Bacillus subtilis (strain 168).